A 70-amino-acid chain; its full sequence is Putative microRNA 17 host gene protein (70 aa).

Residues 1–20 (MFCHVDVKISSKRYTWTKLP) are Cytoplasmic-facing. Residues 21-43 (LNVPKLVLIYLQSHFVLFFFSMC) traverse the membrane as a helical segment. Residues 44–70 (QSIWERPAIGRATTSSASWMVGYDCLL) are Extracellular-facing.

As to expression, highly expressed in B-cell lymphoma and lung cancer.

It localises to the membrane. This chain is Putative microRNA 17 host gene protein (MIR17HG), found in Homo sapiens (Human).